Reading from the N-terminus, the 1481-residue chain is DNA-directed RNA polymerase subunit beta'' (1481 aa).

The Zn(2+) site is built by C217, C291, C298, and C301.

The protein belongs to the RNA polymerase beta' chain family. RpoC2 subfamily. In terms of assembly, in plastids the minimal PEP RNA polymerase catalytic core is composed of four subunits: alpha, beta, beta', and beta''. When a (nuclear-encoded) sigma factor is associated with the core the holoenzyme is formed, which can initiate transcription. Zn(2+) serves as cofactor.

Its subcellular location is the plastid. It localises to the chloroplast. The enzyme catalyses RNA(n) + a ribonucleoside 5'-triphosphate = RNA(n+1) + diphosphate. Its function is as follows. DNA-dependent RNA polymerase catalyzes the transcription of DNA into RNA using the four ribonucleoside triphosphates as substrates. The chain is DNA-directed RNA polymerase subunit beta'' from Trieres chinensis (Marine centric diatom).